Consider the following 257-residue polypeptide: 3-deoxy-manno-octulosonate cytidylyltransferase (257 aa).

The protein belongs to the KdsB family.

It localises to the cytoplasm. The catalysed reaction is 3-deoxy-alpha-D-manno-oct-2-ulosonate + CTP = CMP-3-deoxy-beta-D-manno-octulosonate + diphosphate. It participates in nucleotide-sugar biosynthesis; CMP-3-deoxy-D-manno-octulosonate biosynthesis; CMP-3-deoxy-D-manno-octulosonate from 3-deoxy-D-manno-octulosonate and CTP: step 1/1. It functions in the pathway bacterial outer membrane biogenesis; lipopolysaccharide biosynthesis. Activates KDO (a required 8-carbon sugar) for incorporation into bacterial lipopolysaccharide in Gram-negative bacteria. The chain is 3-deoxy-manno-octulosonate cytidylyltransferase from Xylella fastidiosa (strain M23).